The chain runs to 25 residues: Cysteine-rich venom protein 25 (25 aa).

Positions 1 to 25 (NVDFNSESTRRKKKQKEIVDLXNSL) are disordered.

This sequence belongs to the CRISP family. Post-translationally, contains 8 disulfide bonds. In terms of tissue distribution, expressed by the venom gland.

It is found in the secreted. The chain is Cysteine-rich venom protein 25 from Naja haje haje (Egyptian cobra).